Reading from the N-terminus, the 231-residue chain is Cytochrome c oxidase assembly factor 7 (231 aa).

Residue Ala-2 is modified to N-acetylalanine. 5 Sel1-like repeats span residues 34–66, 68–104, 108–146, 147–183, and 184–219; these read PDGCYRLVDYLEGIRKNFDEAAKVLKFNCEENQ, SDSCYKLGAYYVTGKGGLTQDLKAAARCFLMACEKPG, IAACHNVGLLAHDGQVNEDGQPDLGKARDYYTRACDGGY, TSSCFNLSAMFLQGAPGFPKDMDLACKYSMKACDLGH, and IWACANASRMYKLGDGVDKDEAKAEVLKNRAQQLHK.

The protein belongs to the hcp beta-lactamase family. Interacts with CHCHD4/MIA40 through transient intermolecular disulfide bonds.

The protein resides in the mitochondrion intermembrane space. In terms of biological role, required for assembly of mitochondrial respiratory chain complex I and complex IV. The protein is Cytochrome c oxidase assembly factor 7 (COA7) of Homo sapiens (Human).